The sequence spans 338 residues: Microtubule-associated protein RP/EB family member 2 (338 aa).

The segment at 1-21 (MPGPTQALSPNGENNNDIIQD) is disordered. Residues 57 to 159 (TMSRHDIIAW…FIQWFKKFFD (103 aa)) form the Calponin-homology (CH) domain. 2 disordered regions span residues 171–241 (EARQ…KDLE) and 300–338 (SEEHESHTEEHEGEEQVHEQPSSRRSTDSRSVSDNFHFV). The segment covering 200–234 (SPTAGAAKSSPASKPGSTPSRPSSAKKAAPSSSAS) has biased composition (low complexity). Residues 236-306 (SDKDLETQVI…LYASEEHESH (71 aa)) enclose the EB1 C-terminal domain. Positions 300 to 327 (SEEHESHTEEHEGEEQVHEQPSSRRSTD) are enriched in basic and acidic residues. Low complexity predominate over residues 328–338 (SRSVSDNFHFV).

The protein belongs to the MAPRE family.

It localises to the cytoplasm. Its subcellular location is the cytoskeleton. In terms of biological role, may be involved in microtubule polymerization, and spindle function by stabilizing microtubules and anchoring them at centrosomes. The protein is Microtubule-associated protein RP/EB family member 2 (MAPRE2) of Gallus gallus (Chicken).